The chain runs to 173 residues: Crossover junction endodeoxyribonuclease RuvC (173 aa).

Residues Asp-8, Glu-67, and Asp-139 contribute to the active site. Mg(2+) contacts are provided by Asp-8, Glu-67, and Asp-139.

It belongs to the RuvC family. As to quaternary structure, homodimer which binds Holliday junction (HJ) DNA. The HJ becomes 2-fold symmetrical on binding to RuvC with unstacked arms; it has a different conformation from HJ DNA in complex with RuvA. In the full resolvosome a probable DNA-RuvA(4)-RuvB(12)-RuvC(2) complex forms which resolves the HJ. It depends on Mg(2+) as a cofactor.

It localises to the cytoplasm. It catalyses the reaction Endonucleolytic cleavage at a junction such as a reciprocal single-stranded crossover between two homologous DNA duplexes (Holliday junction).. In terms of biological role, the RuvA-RuvB-RuvC complex processes Holliday junction (HJ) DNA during genetic recombination and DNA repair. Endonuclease that resolves HJ intermediates. Cleaves cruciform DNA by making single-stranded nicks across the HJ at symmetrical positions within the homologous arms, yielding a 5'-phosphate and a 3'-hydroxyl group; requires a central core of homology in the junction. The consensus cleavage sequence is 5'-(A/T)TT(C/G)-3'. Cleavage occurs on the 3'-side of the TT dinucleotide at the point of strand exchange. HJ branch migration catalyzed by RuvA-RuvB allows RuvC to scan DNA until it finds its consensus sequence, where it cleaves and resolves the cruciform DNA. This Shewanella oneidensis (strain ATCC 700550 / JCM 31522 / CIP 106686 / LMG 19005 / NCIMB 14063 / MR-1) protein is Crossover junction endodeoxyribonuclease RuvC.